Consider the following 50-residue polypeptide: Conotoxin Cal6.19 (50 aa).

An N-terminal signal peptide occupies residues Met-1–Ala-22. 3 disulfide bridges follow: Cys-24/Cys-37, Cys-30/Cys-41, and Cys-36/Cys-46.

Expressed by the venom duct.

The protein resides in the secreted. Probable neurotoxin. The polypeptide is Conotoxin Cal6.19 (Californiconus californicus (California cone)).